Here is a 431-residue protein sequence, read N- to C-terminus: E3 ubiquitin-protein ligase RNF128 (431 aa).

The signal sequence occupies residues 1 to 38 (MGQLPGAGVFCRGGCGFSRLLAWCFLLVLSPQTPGSRG). N-linked (GlcNAc...) asparagine glycosylation is found at asparagine 48, asparagine 59, and asparagine 101. Positions 75 to 186 (SPLEPVAGVL…LKGTKILQSI (112 aa)) constitute a PA domain. The helical transmembrane segment at 211–231 (IFFVSVSFFIITAATVGYFIF) threads the bilayer. The RING-type; atypical zinc finger occupies 280-321 (CAVCIELYKPNDLVRILTCNHVFHKTCVDPWLLEHRTCPMCK). The span at 345–354 (VSNETSSNAS) shows a compositional bias: polar residues. Residues 345 to 431 (VSNETSSNAS…QETTVREIKS (87 aa)) form a disordered region.

Auto-ubiquitinated. Controls the development of T-cell clonal anergy by ubiquitination.

The protein localises to the cytoplasm. It localises to the endomembrane system. It is found in the cytoskeleton. Its subcellular location is the perinuclear region. It catalyses the reaction S-ubiquitinyl-[E2 ubiquitin-conjugating enzyme]-L-cysteine + [acceptor protein]-L-lysine = [E2 ubiquitin-conjugating enzyme]-L-cysteine + N(6)-ubiquitinyl-[acceptor protein]-L-lysine.. It participates in protein modification; protein ubiquitination. Its function is as follows. E3 ubiquitin-protein ligase that catalyzes 'Lys-27', 'Lys-48'- or 'Lys-63'-linked polyubiquitin chains formation and plays a role in different biological processes such as modulation of immune response, cytoskeletal dynamics or protein homeostasis. Inhibits IL2 and IL4 transcription, thereby playing an important role in the induction of the anergic phenotype, a long-term stable state of T-lymphocyte unresponsiveness to antigenic stimulation associated with the blockade of interleukin production. Ubiquitinates ARPC5 with 'Lys-48' linkages and COR1A with 'Lys-63' linkages leading to their degradation, down-regulation of these cytoskeletal components results in impaired lamellipodium formation and reduced accumulation of F-actin at the immunological synapse. Functions in the patterning of the dorsal ectoderm; sensitizes ectoderm to respond to neural-inducing signals. Plays a positive role in innate immune response by promoting 'Lys-63'-linked ubiquitination of TBK1 after RNA- or DNA-virus infection. Regulates alveolar macrophage activation and neutrophil infiltration by interacting with TLR4, targeting it for degradation, and inhibiting NF-kappa-B activation, hence decreasing pro-inflammatory cytokines. Negatively regulates the IL-3/STAT5 signaling pathway by facilitating 'Lys-27'-linked polyubiquitination of IL3RA leading to its degradation via lysosomal pathway. Directly regulates the N-glycosylation process in the endoplasmic reticulum by targeting the glycosyl-transferase RPN1 for ubiquitination and degradation. Other substrates targeted for degradation by RNF128 include transmembrane proteins CD40L, CD83 or the tetraspanin CD151. In Bos taurus (Bovine), this protein is E3 ubiquitin-protein ligase RNF128 (RNF128).